We begin with the raw amino-acid sequence, 234 residues long: Large ribosomal subunit protein uL1 (234 aa).

This sequence belongs to the universal ribosomal protein uL1 family. As to quaternary structure, part of the 50S ribosomal subunit.

In terms of biological role, binds directly to 23S rRNA. The L1 stalk is quite mobile in the ribosome, and is involved in E site tRNA release. Its function is as follows. Protein L1 is also a translational repressor protein, it controls the translation of the L11 operon by binding to its mRNA. The chain is Large ribosomal subunit protein uL1 from Helicobacter hepaticus (strain ATCC 51449 / 3B1).